Reading from the N-terminus, the 1437-residue chain is IQ domain-containing protein N (1437 aa).

In terms of domain architecture, IQ 1 spans 84-112 (SRAATVIQASWKGYRLRQKLISQMTAAKA). Disordered regions lie at residues 332–353 (TSPT…SLSN), 416–440 (SQAQ…KPSP), and 848–878 (STGS…QNPR). The span at 422–440 (TVSTSSKTSPSSPTVKPSP) shows a compositional bias: low complexity. The segment covering 861–878 (AQPQLHSHAPNKTMQNPR) has biased composition (polar residues). 5 consecutive IQ domains span residues 1190–1216 (QAVV…QWAT), 1217–1239 (IIQA…RATT), 1240–1258 (IIQA…ARQV), 1361–1389 (QHRA…SAAK), and 1390–1413 (MVQA…LGTG).

As to quaternary structure, interacts with calmodulin. As to expression, expressed in testis, in elongating spermatids (at protein level).

Essential for spermiogenesis and fertilization. May be required for manchette assembly in elongating spermatids. The sequence is that of IQ domain-containing protein N (Iqcn) from Mus musculus (Mouse).